The chain runs to 542 residues: Delta 8-(E)-sphingolipid desaturase (542 aa).

The region spanning 1–75 (MVVSREEVRE…FKRWSIGRVK (75 aa)) is the Cytochrome b5 heme-binding domain. His-35 and His-58 together coordinate heme. A run of 2 helical transmembrane segments spans residues 215-235 (WYTL…FIAH) and 248-268 (IDNI…LGWW). Residues 235–239 (HDAGH) carry the Histidine box-1 motif. Residues 272–276 (HNVHH) carry the Histidine box-2 motif. A run of 3 helical transmembrane segments spans residues 329-346 (LYYP…RLSW), 360-380 (AAWF…WFFY), and 393-413 (FWFL…IVLS). A Histidine box-3 motif is present at residues 455 to 459 (QAIHH).

This sequence belongs to the fatty acid desaturase type 1 family.

The protein localises to the membrane. The enzyme catalyses an N-acylsphing-4-enine + 2 Fe(II)-[cytochrome b5] + O2 + 2 H(+) = a (4E,8E)-4-sphinga-4,8-dienine ceramide + 2 Fe(III)-[cytochrome b5] + 2 H2O. It functions in the pathway lipid metabolism; sphingolipid metabolism. Functionally, delta(8)-fatty-acid desaturase which introduces a double bond at the 8-position in the long-chain base (LCB) of ceramides. Required for the formation of the di-unsaturated sphingoid base (E,E)-sphinga-4,8-dienine during glucosylceramide (GluCer) biosynthesis. The chain is Delta 8-(E)-sphingolipid desaturase from Komagataella phaffii (strain GS115 / ATCC 20864) (Yeast).